The sequence spans 164 residues: MADS-box transcription factor 51 (164 aa).

Residues 2-62 (ARRGRVQLRR…GKLYEYSSSS (61 aa)) form the MADS-box domain. A disordered region spans residues 133-164 (TKSKKMLAKQNGEGSRSRANSSGSRGQEEGSA).

In terms of tissue distribution, widely expressed.

It is found in the nucleus. Probable transcription factor involved in the regulation of flowering time under short day (SD) conditions. Functions as a promoter of flowering under SD conditions, upstream of EHD1, HD3A and MADS14, but downstream of GIGANTEA (GI). May transmit a SD promotion signal from GI to EHD1. Functions independently of MADS50 to control flowering time. The polypeptide is MADS-box transcription factor 51 (Oryza sativa subsp. japonica (Rice)).